Here is a 339-residue protein sequence, read N- to C-terminus: Ribosomal RNA small subunit methyltransferase H (339 aa).

Residues G36 to Y38, D55, F82, D103, and Q110 contribute to the S-adenosyl-L-methionine site. The tract at residues G286–P319 is disordered.

It belongs to the methyltransferase superfamily. RsmH family.

The protein resides in the cytoplasm. The catalysed reaction is cytidine(1402) in 16S rRNA + S-adenosyl-L-methionine = N(4)-methylcytidine(1402) in 16S rRNA + S-adenosyl-L-homocysteine + H(+). In terms of biological role, specifically methylates the N4 position of cytidine in position 1402 (C1402) of 16S rRNA. The protein is Ribosomal RNA small subunit methyltransferase H of Methylobacterium nodulans (strain LMG 21967 / CNCM I-2342 / ORS 2060).